We begin with the raw amino-acid sequence, 232 residues long: MLKLTDITWLYHHLPMRFSLTVERGEQVAILGPSGAGKSTLLNLIAGFLTPASGSLTIDGVDHTTMPPSRRPVSMLFQENNLFSHLTVAQNIGLGLNPGLKLNAVQQGKMHAIARQMGIDNLMARLPGELSGGQRQRVALARCLVREQPILLLDEPFSALDPALRQEMLTLVSTSCQQQKMTLLMVSHSVEDAARIATRSVVVADGRIAWQGMTNELLSGKASASALLGITG.

One can recognise an ABC transporter domain in the interval 2–230 (LKLTDITWLY…KASASALLGI (229 aa)). Residue 32 to 39 (GPSGAGKS) coordinates ATP.

The protein belongs to the ABC transporter superfamily. Thiamine importer (TC 3.A.1.19.1) family. In terms of assembly, the complex is composed of two ATP-binding proteins (ThiQ), two transmembrane proteins (ThiP) and a solute-binding protein (ThiB).

Its subcellular location is the cell inner membrane. The enzyme catalyses thiamine(out) + ATP + H2O = thiamine(in) + ADP + phosphate + H(+). Part of the ABC transporter complex ThiBPQ involved in thiamine import. Responsible for energy coupling to the transport system. The sequence is that of Thiamine import ATP-binding protein ThiQ from Escherichia coli (strain K12).